The following is a 589-amino-acid chain: Probable galacturonosyltransferase 6 (589 aa).

Residues 1–6 lie on the Cytoplasmic side of the membrane; that stretch reads MKQIRR. Residues 7-27 form a helical; Signal-anchor for type II membrane protein membrane-spanning segment; that stretch reads WQRILILALLSISVFAPLIFV. At 28–589 the chain is on the lumenal side; the sequence is SNRLKSITPV…TYLQQCNLQA (562 aa). N-linked (GlcNAc...) asparagine glycans are attached at residues Asn83 and Asn126. The interval 127–151 is disordered; it reads KTDFKPPLSKGEKNTRVQPDRATDV. Basic and acidic residues predominate over residues 136-151; it reads KGEKNTRVQPDRATDV. N-linked (GlcNAc...) asparagine glycosylation is found at Asn317 and Asn454.

This sequence belongs to the glycosyltransferase 8 family. In terms of tissue distribution, expressed in roots, inflorescences, siliques, leaves and stems.

It localises to the golgi apparatus membrane. Its pathway is glycan metabolism; pectin biosynthesis. Functionally, probably involved in pectin biosynthesis in cell walls. In Arabidopsis thaliana (Mouse-ear cress), this protein is Probable galacturonosyltransferase 6 (GAUT6).